The sequence spans 183 residues: Streptavidin-V2 (183 aa).

An N-terminal signal peptide occupies residues 1–24 (MRKIVVAAIAVSLTTVGITASASA). One can recognise an Avidin-like domain in the interval 37 to 159 (AEAGITGTWY…GHDTFTKVKP (123 aa)). Residues Tyr67 and Tyr78 each contribute to the biotin site. Positions 83–85 (RYD) match the Cell attachment site; atypical motif. 3 residues coordinate biotin: Trp116, Trp132, and Trp144.

It belongs to the avidin/streptavidin family. As to quaternary structure, homotetramer.

The protein resides in the secreted. The biological function of streptavidin is not known. Forms a strong non-covalent specific complex with biotin (one molecule of biotin per subunit of streptavidin). The sequence is that of Streptavidin-V2 from Streptomyces violaceus (Streptomyces venezuelae).